Here is a 183-residue protein sequence, read N- to C-terminus: Transcription termination/antitermination protein NusG (183 aa).

The region spanning 131–161 (PGEEVRVTEGPFADFNGTVEEVDYEKGRLKV) is the KOW domain.

The protein belongs to the NusG family.

In terms of biological role, participates in transcription elongation, termination and antitermination. The chain is Transcription termination/antitermination protein NusG from Pasteurella multocida (strain Pm70).